Reading from the N-terminus, the 113-residue chain is Cytochrome c (113 aa).

Residues Cys-21, Cys-24, His-25, and Met-90 each contribute to the heme c site.

It belongs to the cytochrome c family. Post-translationally, binds 1 heme c group covalently per subunit.

Its subcellular location is the mitochondrion intermembrane space. In terms of biological role, electron carrier protein. The oxidized form of the cytochrome c heme group can accept an electron from the heme group of the cytochrome c1 subunit of cytochrome reductase. Cytochrome c then transfers this electron to the cytochrome oxidase complex, the final protein carrier in the mitochondrial electron-transport chain. This Dictyostelium discoideum (Social amoeba) protein is Cytochrome c (cytC).